Here is a 425-residue protein sequence, read N- to C-terminus: Histidine--tRNA ligase (425 aa).

It belongs to the class-II aminoacyl-tRNA synthetase family. As to quaternary structure, homodimer.

The protein localises to the cytoplasm. It catalyses the reaction tRNA(His) + L-histidine + ATP = L-histidyl-tRNA(His) + AMP + diphosphate + H(+). The chain is Histidine--tRNA ligase from Chlorobium chlorochromatii (strain CaD3).